A 577-amino-acid polypeptide reads, in one-letter code: Phosphoethanolamine transferase CptA (577 aa).

The next 5 helical transmembrane spans lie at Leu17 to Leu37, Gly45 to Gly65, Val69 to Tyr89, Tyr119 to Trp139, and Leu154 to Ile174.

Belongs to the phosphoethanolamine transferase family. EptC/CptA subfamily.

It is found in the cell inner membrane. The protein operates within bacterial outer membrane biogenesis; LPS core biosynthesis. Catalyzes the addition of a phosphoethanolamine moiety to the outer membrane lipopolysaccharide core. The polypeptide is Phosphoethanolamine transferase CptA (cptA) (Salmonella typhimurium (strain LT2 / SGSC1412 / ATCC 700720)).